The chain runs to 335 residues: Fimbrial adhesin PapGIII (335 aa).

The first 21 residues, 1–21 (MKKWLPAFLFLSLSGCNDALA), serve as a signal peptide directing secretion.

The protein belongs to the adhesin PapG family.

It localises to the secreted. The protein resides in the fimbrium. In terms of biological role, tip adhesin component of type P pili that binds preferentially to Gal-alpha(1-4)-Gal-containing glycolipids such as globoside. This tip is common in E.coli strains that cause human cystitis, but rare in pyelonephritic isolates. The protein is Fimbrial adhesin PapGIII of Escherichia coli.